Consider the following 161-residue polypeptide: Allophycocyanin beta subunit (161 aa).

Position 71 is an N4-methylasparagine (N71). Residue C81 participates in (2R,3E)-phycocyanobilin binding.

The protein belongs to the phycobiliprotein family. In terms of assembly, heterodimer of an alpha and a beta chain. Post-translationally, contains one covalently linked phycocyanobilin chromophore. The chromophore is added by the phycocyanobilin lyase CpcUS.

The protein localises to the cellular thylakoid membrane. Its function is as follows. Light-harvesting photosynthetic bile pigment-protein from the phycobiliprotein complex. Allophycocyanin has a maximum absorption at approximately 650 nanometers. The polypeptide is Allophycocyanin beta subunit (apcB) (Picosynechococcus sp. (strain ATCC 27264 / PCC 7002 / PR-6) (Agmenellum quadruplicatum)).